Consider the following 190-residue polypeptide: Pyridoxal 5'-phosphate synthase subunit PdxT (190 aa).

46 to 48 (GES) lines the L-glutamine pocket. Cys-78 acts as the Nucleophile in catalysis. L-glutamine-binding positions include Arg-108 and 137-138 (IR). Active-site charge relay system residues include His-174 and Glu-176.

It belongs to the glutaminase PdxT/SNO family. As to quaternary structure, in the presence of PdxS, forms a dodecamer of heterodimers. Only shows activity in the heterodimer.

It catalyses the reaction aldehydo-D-ribose 5-phosphate + D-glyceraldehyde 3-phosphate + L-glutamine = pyridoxal 5'-phosphate + L-glutamate + phosphate + 3 H2O + H(+). The enzyme catalyses L-glutamine + H2O = L-glutamate + NH4(+). It participates in cofactor biosynthesis; pyridoxal 5'-phosphate biosynthesis. Its function is as follows. Catalyzes the hydrolysis of glutamine to glutamate and ammonia as part of the biosynthesis of pyridoxal 5'-phosphate. The resulting ammonia molecule is channeled to the active site of PdxS. This is Pyridoxal 5'-phosphate synthase subunit PdxT from Chloroflexus aggregans (strain MD-66 / DSM 9485).